The chain runs to 207 residues: Large ribosomal subunit protein bL25 (207 aa).

It belongs to the bacterial ribosomal protein bL25 family. CTC subfamily. In terms of assembly, part of the 50S ribosomal subunit; part of the 5S rRNA/L5/L18/L25 subcomplex. Contacts the 5S rRNA. Binds to the 5S rRNA independently of L5 and L18.

Functionally, this is one of the proteins that binds to the 5S RNA in the ribosome where it forms part of the central protuberance. This Brucella canis (strain ATCC 23365 / NCTC 10854 / RM-666) protein is Large ribosomal subunit protein bL25.